A 355-amino-acid chain; its full sequence is DNA polymerase IV (355 aa).

Positions isoleucine 7 to glycine 188 constitute a UmuC domain. Residues aspartate 11 and aspartate 106 each coordinate Mg(2+). Residue glutamate 107 is part of the active site.

The protein belongs to the DNA polymerase type-Y family. As to quaternary structure, monomer. It depends on Mg(2+) as a cofactor.

The protein localises to the cytoplasm. The enzyme catalyses DNA(n) + a 2'-deoxyribonucleoside 5'-triphosphate = DNA(n+1) + diphosphate. Poorly processive, error-prone DNA polymerase involved in untargeted mutagenesis. Copies undamaged DNA at stalled replication forks, which arise in vivo from mismatched or misaligned primer ends. These misaligned primers can be extended by PolIV. Exhibits no 3'-5' exonuclease (proofreading) activity. May be involved in translesional synthesis, in conjunction with the beta clamp from PolIII. The sequence is that of DNA polymerase IV from Legionella pneumophila (strain Corby).